Here is an 86-residue protein sequence, read N- to C-terminus: Venom metalloproteinase (86 aa).

Ca(2+) is bound at residue Asp7. Position 67 (His67) interacts with Zn(2+). The active site involves Glu68. The Zn(2+) site is built by His71 and His77.

This sequence belongs to the venom metalloproteinase (M12B) family. Zn(2+) serves as cofactor. As to expression, expressed by the venom gland.

It is found in the secreted. The chain is Venom metalloproteinase from Tityus serrulatus (Brazilian scorpion).